Here is a 206-residue protein sequence, read N- to C-terminus: Large ribosomal subunit protein uL22m (206 aa).

The transit peptide at 1–40 directs the protein to the mitochondrion; the sequence is MAAALLRELGALWVPNLRIWTTQMLRVLPQSCIHTSTSLD.

Belongs to the universal ribosomal protein uL22 family. Component of the mitochondrial ribosome large subunit (39S) which comprises a 16S rRNA and about 50 distinct proteins.

Its subcellular location is the mitochondrion. This is Large ribosomal subunit protein uL22m (Mrpl22) from Rattus norvegicus (Rat).